A 265-amino-acid chain; its full sequence is Phosphatidylserine decarboxylase proenzyme (265 aa).

Active-site charge relay system; for autoendoproteolytic cleavage activity residues include aspartate 86, histidine 142, and serine 226. Residue serine 226 is the Schiff-base intermediate with substrate; via pyruvic acid; for decarboxylase activity of the active site. At serine 226 the chain carries Pyruvic acid (Ser); by autocatalysis.

Belongs to the phosphatidylserine decarboxylase family. PSD-B subfamily. Prokaryotic type I sub-subfamily. As to quaternary structure, heterodimer of a large membrane-associated beta subunit and a small pyruvoyl-containing alpha subunit. Pyruvate is required as a cofactor. In terms of processing, is synthesized initially as an inactive proenzyme. Formation of the active enzyme involves a self-maturation process in which the active site pyruvoyl group is generated from an internal serine residue via an autocatalytic post-translational modification. Two non-identical subunits are generated from the proenzyme in this reaction, and the pyruvate is formed at the N-terminus of the alpha chain, which is derived from the carboxyl end of the proenzyme. The autoendoproteolytic cleavage occurs by a canonical serine protease mechanism, in which the side chain hydroxyl group of the serine supplies its oxygen atom to form the C-terminus of the beta chain, while the remainder of the serine residue undergoes an oxidative deamination to produce ammonia and the pyruvoyl prosthetic group on the alpha chain. During this reaction, the Ser that is part of the protease active site of the proenzyme becomes the pyruvoyl prosthetic group, which constitutes an essential element of the active site of the mature decarboxylase.

The protein resides in the cell membrane. The catalysed reaction is a 1,2-diacyl-sn-glycero-3-phospho-L-serine + H(+) = a 1,2-diacyl-sn-glycero-3-phosphoethanolamine + CO2. Its pathway is phospholipid metabolism; phosphatidylethanolamine biosynthesis; phosphatidylethanolamine from CDP-diacylglycerol: step 2/2. In terms of biological role, catalyzes the formation of phosphatidylethanolamine (PtdEtn) from phosphatidylserine (PtdSer). The sequence is that of Phosphatidylserine decarboxylase proenzyme from Anoxybacillus flavithermus (strain DSM 21510 / WK1).